The primary structure comprises 284 residues: uncharacterized protein (284 aa).

Residues 1–27 (MSNLPTSTPVSPSNLAEENPKSNNPES) are compositionally biased toward polar residues. 2 disordered regions span residues 1–29 (MSNL…ESSE) and 248–284 (TRDS…LKKK).

This is an uncharacterized protein from Caenorhabditis elegans.